The sequence spans 238 residues: tRNA (guanine-N(7)-)-methyltransferase (238 aa).

Residues 1-12 (MTDTAENQTPND) are compositionally biased toward polar residues. The tract at residues 1 to 20 (MTDTAENQTPNDRQAGHPRS) is disordered. The S-adenosyl-L-methionine site is built by Glu70, Asp95, Asp122, and Asp145. Asp145 is an active-site residue. Substrate-binding positions include Lys149, Asp181, and 216–219 (TKFE).

Belongs to the class I-like SAM-binding methyltransferase superfamily. TrmB family.

It carries out the reaction guanosine(46) in tRNA + S-adenosyl-L-methionine = N(7)-methylguanosine(46) in tRNA + S-adenosyl-L-homocysteine. It participates in tRNA modification; N(7)-methylguanine-tRNA biosynthesis. Catalyzes the formation of N(7)-methylguanine at position 46 (m7G46) in tRNA. In Neisseria gonorrhoeae (strain NCCP11945), this protein is tRNA (guanine-N(7)-)-methyltransferase.